Consider the following 279-residue polypeptide: Nucleotide-binding protein THA_1518 (279 aa).

9–16 (GLSGAGKS) serves as a coordination point for ATP. 57-60 (DARS) is a binding site for GTP.

It belongs to the RapZ-like family.

In terms of biological role, displays ATPase and GTPase activities. The protein is Nucleotide-binding protein THA_1518 of Thermosipho africanus (strain TCF52B).